The sequence spans 395 residues: Probable eukaryotic translation initiation factor 5 (395 aa).

Residue 28 to 35 (GKGNGIKT) participates in GTP binding. Disordered stretches follow at residues 146-171 (PPAKKKSHKHKRDSPVAEEEDGAEDE) and 374-395 (LAEASDESESEDEEEEEEDDDE). Positions 147-157 (PAKKKSHKHKR) are enriched in basic residues. 2 stretches are compositionally biased toward acidic residues: residues 161-170 (VAEEEDGAED) and 377-395 (ASDESESEDEEEEEEDDDE). The region spanning 228 to 384 (EEAESSRYDQ…AEASDESESE (157 aa)) is the W2 domain.

Belongs to the eIF-2-beta/eIF-5 family. As to quaternary structure, monomer.

Functionally, catalyzes the hydrolysis of GTP bound to the 40S ribosomal initiation complex (40S.mRNA.Met-tRNA[F].eIF-2.GTP) with the subsequent joining of a 60S ribosomal subunit resulting in the release of eIF-2 and the guanine nucleotide. The subsequent joining of a 60S ribosomal subunit results in the formation of a functional 80S initiation complex (80S.mRNA.Met-tRNA[F]). The sequence is that of Probable eukaryotic translation initiation factor 5 (tif5) from Schizosaccharomyces pombe (strain 972 / ATCC 24843) (Fission yeast).